Here is a 128-residue protein sequence, read N- to C-terminus: MSKPKRERSLPDNEAKAVARMLRVSPQKLNLVAQLIRGRKASAALADLQFSRKRIAVDVKKCLESAIANAENNHDLDVDDLVVSQAFVGKGIVMKRFAPRGRGRSGRIFKPFAQLTIIVRQVEAEASA.

Belongs to the universal ribosomal protein uL22 family. As to quaternary structure, part of the 50S ribosomal subunit.

In terms of biological role, this protein binds specifically to 23S rRNA; its binding is stimulated by other ribosomal proteins, e.g. L4, L17, and L20. It is important during the early stages of 50S assembly. It makes multiple contacts with different domains of the 23S rRNA in the assembled 50S subunit and ribosome. Functionally, the globular domain of the protein is located near the polypeptide exit tunnel on the outside of the subunit, while an extended beta-hairpin is found that lines the wall of the exit tunnel in the center of the 70S ribosome. This is Large ribosomal subunit protein uL22 from Rhodopseudomonas palustris (strain BisA53).